A 201-amino-acid polypeptide reads, in one-letter code: 3-isopropylmalate dehydratase small subunit (201 aa).

Belongs to the LeuD family. LeuD type 1 subfamily. As to quaternary structure, heterodimer of LeuC and LeuD.

It carries out the reaction (2R,3S)-3-isopropylmalate = (2S)-2-isopropylmalate. The protein operates within amino-acid biosynthesis; L-leucine biosynthesis; L-leucine from 3-methyl-2-oxobutanoate: step 2/4. Functionally, catalyzes the isomerization between 2-isopropylmalate and 3-isopropylmalate, via the formation of 2-isopropylmaleate. The polypeptide is 3-isopropylmalate dehydratase small subunit (Cytophaga hutchinsonii (strain ATCC 33406 / DSM 1761 / CIP 103989 / NBRC 15051 / NCIMB 9469 / D465)).